A 376-amino-acid polypeptide reads, in one-letter code: 1-acyl-sn-glycerol-3-phosphate acyltransferase gamma (376 aa).

The Cytoplasmic segment spans residues 1 to 124 (MGLLAFLKTQ…LGSSKVLAKK (124 aa)). The short motif at 96 to 101 (HNFEID) is the HXXXXD motif element. Residues 125–145 (ELLYVPLIGWTWYFLEIVFCK) traverse the membrane as a helical segment. Residues 146 to 316 (RKWEEDRDTV…TLLNFLSWAT (171 aa)) are Lumenal-facing. A helical membrane pass occupies residues 317–339 (ILLSPLFSFVLGVFASGSPLLIL). The Cytoplasmic portion of the chain corresponds to 340–376 (TFLGFVGAASFGVRRLIGVTEIEKGSSYGNQEFKKKE).

It belongs to the 1-acyl-sn-glycerol-3-phosphate acyltransferase family.

The protein resides in the endoplasmic reticulum membrane. It localises to the nucleus envelope. It catalyses the reaction a 1-acyl-sn-glycero-3-phosphate + an acyl-CoA = a 1,2-diacyl-sn-glycero-3-phosphate + CoA. The enzyme catalyses pentadecanoyl-CoA + 1-(9Z-octadecenoyl)-sn-glycero-3-phosphate = 1-(9Z)-octadecenoyl-2-pentadecanoyl-sn-glycero-3-phosphate + CoA. It carries out the reaction heptadecanoyl-CoA + 1-(9Z-octadecenoyl)-sn-glycero-3-phosphate = 1-(9Z)-octadecenoyl-2-heptadecanoyl-sn-glycero-3-phosphate + CoA. The catalysed reaction is 1-(9Z-octadecenoyl)-sn-glycero-3-phosphate + octadecanoyl-CoA = 1-(9Z-octadecenoyl)-2-octadecanoyl-sn-glycero-3-phosphate + CoA. It catalyses the reaction nonadecanoyl-CoA + 1-(9Z-octadecenoyl)-sn-glycero-3-phosphate = 1-(9Z)-octadecenoyl-2-nonadecanoyl-sn-glycero-3-phosphate + CoA. The enzyme catalyses 1-(9Z-octadecenoyl)-sn-glycero-3-phosphate + (5Z,8Z,11Z,14Z)-eicosatetraenoyl-CoA = 1-(9Z)-octadecenoyl-2-(5Z,8Z,11Z,14Z)-eicosatetraenoyl-sn-glycero-3-phosphate + CoA. It carries out the reaction 1-(9Z-octadecenoyl)-sn-glycero-3-phosphate + (9Z)-octadecenoyl-CoA = 1,2-di-(9Z-octadecenoyl)-sn-glycero-3-phosphate + CoA. The catalysed reaction is 1-(9Z-octadecenoyl)-sn-glycero-3-phosphate + (9Z,12Z)-octadecadienoyl-CoA = 1-(9Z)-octadecenoyl-2-(9Z,12Z)-octadecadienoyl-sn-glycero-3-phosphate + CoA. It catalyses the reaction 1-(9Z-octadecenoyl)-sn-glycero-3-phosphocholine + (5Z,8Z,11Z,14Z)-eicosatetraenoyl-CoA = 1-(9Z)-octadecenoyl-2-(5Z,8Z,11Z,14Z)-icosatetraenoyl-sn-glycero-3-phosphocholine + CoA. The enzyme catalyses 1-(9Z-octadecenoyl)-sn-glycero-3-phospho-(1D-myo-inositol) + (5Z,8Z,11Z,14Z)-eicosatetraenoyl-CoA = 1-(9Z-octadecenoyl)-2-(5Z,8Z,11Z,14Z-eicosatetraenoyl)-sn-glycero-3-phospho-1D-myo-inositol + CoA. It carries out the reaction 1-(9Z-octadecenoyl)-sn-glycero-3-phospho-L-serine + (5Z,8Z,11Z,14Z)-eicosatetraenoyl-CoA = 1-(9Z-octadecenoyl)-2-(5Z,8Z,11Z,14Z-eicosatetraenoyl)-sn-glycero-3-phospho-L-serine + CoA. The catalysed reaction is 1-hexadecanoyl-sn-glycero-3-phosphate + (9Z)-octadecenoyl-CoA = 1-hexadecanoyl-2-(9Z-octadecenoyl)-sn-glycero-3-phosphate + CoA. It catalyses the reaction 1-hexadecanoyl-sn-glycero-3-phosphate + (5Z,8Z,11Z,14Z)-eicosatetraenoyl-CoA = 1-hexadecanoyl-2-(5Z,8Z,11Z,14Z-eicosatetraenoyl)-sn-glycero-3-phosphate + CoA. The enzyme catalyses 1-heptadecanoyl-sn-glycero-3-phosphate + (5Z,8Z,11Z,14Z)-eicosatetraenoyl-CoA = 1-heptadecanoyl-2-(5Z,8Z,11Z,14Z)-eicosatetraenoyl-sn-glycero-3-phosphate + CoA. It carries out the reaction 1-octadecanoyl-sn-glycero-3-phosphate + (9Z)-octadecenoyl-CoA = 1-octadecanoyl-2-(9Z-octadecenoyl)-sn-glycero-3-phosphate + CoA. The catalysed reaction is 1-octadecanoyl-sn-glycero-3-phosphate + (5Z,8Z,11Z,14Z)-eicosatetraenoyl-CoA = 1-octadecanoyl-2-(5Z,8Z,11Z,14Z-eicosatetraenoyl)-sn-glycero-3-phosphate + CoA. It catalyses the reaction 1-(9Z-octadecenoyl)-sn-glycero-3-phosphate + hexadecanoyl-CoA = 1-hexadecanoyl-2-(9Z-octadecenoyl)-sn-glycero-3-phosphate + CoA. The enzyme catalyses 1-O-(9Z-octadecenyl)-sn-glycero-3-phosphate + (5Z,8Z,11Z,14Z)-eicosatetraenoyl-CoA = 1-O-(9Z-octadecenyl)-2-(5Z,8Z,11Z,14Z-eicosatetraenoyl)-sn-glycero-3-phosphate + CoA. It carries out the reaction a 1-acyl-sn-glycero-3-phospho-(1D-myo-inositol) + (5Z,8Z,11Z,14Z)-eicosatetraenoyl-CoA = a 1-acyl-2-(5Z,8Z,11Z,14Z-eicosatetraenoyl)-sn-glycero-3-phospho-(1D-myo-inositol) + CoA. Its pathway is phospholipid metabolism; CDP-diacylglycerol biosynthesis; CDP-diacylglycerol from sn-glycerol 3-phosphate: step 2/3. Converts 1-acyl-sn-glycerol-3-phosphate (lysophosphatidic acid or LPA) into 1,2-diacyl-sn-glycerol-3-phosphate (phosphatidic acid or PA) by incorporating an acyl moiety at the sn-2 position of the glycerol backbone. Acts on LPA containing saturated or unsaturated fatty acids C16:0-C20:4 at the sn-1 position using C18:1, C20:4 or C18:2-CoA as the acyl donor. Also acts on lysophosphatidylcholine, lysophosphatidylinositol and lysophosphatidylserine using C18:1 or C20:4-CoA. Has a preference for arachidonoyl-CoA as a donor. Also has a modest lysophosphatidylinositol acyltransferase (LPIAT) activity, converts lysophosphatidylinositol (LPI) into phosphatidylinositol. In Pongo abelii (Sumatran orangutan), this protein is 1-acyl-sn-glycerol-3-phosphate acyltransferase gamma (AGPAT3).